Here is an 876-residue protein sequence, read N- to C-terminus: Inter-alpha-trypsin inhibitor heavy chain H3 (876 aa).

Positions 1–18 (MVALSHLGSALQLGSLWG) are cleaved as a signal peptide. Residues 19–31 (FPRSPFRLLGKRS) constitute a propeptide that is removed on maturation. Residues 26 to 155 (LLGKRSLPEG…KVTFELTYEE (130 aa)) form the VIT domain. N88 carries an N-linked (GlcNAc...) asparagine glycan. Residues 281 to 464 (NVAFVIDISG…LQLQGFYEEV (184 aa)) form the VWFA domain. Residue N577 is glycosylated (N-linked (GlcNAc...) asparagine). The residue at position 637 (D637) is an Aspartate 1-(chondroitin 4-sulfate)-ester. Residues 638–876 (PHFIIQVPEK…HTDYIVPNLF (239 aa)) constitute a propeptide that is removed on maturation.

The protein belongs to the ITIH family. I-alpha-I plasma protease inhibitors are assembled from one or two heavy chains (HC) and one light chain, bikunin. Pre-alpha-inhibitor (P-alpha-I) is composed of ITIH3/HC3 and bikunin. Heavy chains are linked to bikunin via chondroitin 4-sulfate esterified to the alpha-carboxyl of the C-terminal aspartate after propeptide cleavage.

The protein resides in the secreted. Its function is as follows. May act as a carrier of hyaluronan in serum or as a binding protein between hyaluronan and other matrix protein, including those on cell surfaces in tissues to regulate the localization, synthesis and degradation of hyaluronan which are essential to cells undergoing biological processes. In Pongo abelii (Sumatran orangutan), this protein is Inter-alpha-trypsin inhibitor heavy chain H3 (ITIH3).